The primary structure comprises 236 residues: SERTA domain-containing protein 1 (236 aa).

The region spanning 38-85 (PTVASSSLFDLSVVKLHHSLRQSEPDLRHLVLVVNTLRRIQASMEPAP) is the SERTA domain. Positions 190-211 (ASEGLKPGPENGPAKEEPPELD) are disordered.

As to quaternary structure, interacts with the PHD-bromodomain of TIF1, TRIM28/TIF1B and p300/CBP. Interacts with E2F1 and TFDP1; modulates transactivation activity of TFDP1/E2F complexes. Also interacts with CDK4. Polyubiquitinated, which promotes proteasomal degradation. In terms of tissue distribution, detected at in testis, lung and, at lower levels, in muscle, liver, spleen, brain and heart.

Functionally, acts at E2F-responsive promoters as coregulator to integrate signals provided by PHD- and/or bromodomain-containing transcription factors. Stimulates E2F1/TFDP1 transcriptional activity. Renders the activity of cyclin D1/CDK4 resistant to the inhibitory effects of CDKN2A/p16INK4A. The protein is SERTA domain-containing protein 1 (Sertad1) of Mus musculus (Mouse).